Consider the following 112-residue polypeptide: Large ribosomal subunit protein bL17 (112 aa).

Belongs to the bacterial ribosomal protein bL17 family. As to quaternary structure, part of the 50S ribosomal subunit. Contacts protein L32.

In Desulforudis audaxviator (strain MP104C), this protein is Large ribosomal subunit protein bL17.